Here is a 536-residue protein sequence, read N- to C-terminus: Mannuronan C5-epimerase (536 aa).

An N-terminal signal peptide occupies residues M1–A36. PbH1 repeat units follow at residues T298–D320, S322–R345, V347–R369, S371–E393, and S394–N416. H319 acts as the Proton acceptor in catalysis.

Belongs to the D-mannuronate C5-epimerase family.

The protein localises to the periplasm. It carries out the reaction [(1-&gt;4)-beta-D-mannuronosyl](n) = [alginate](n). It functions in the pathway glycan biosynthesis; alginate biosynthesis. Catalyzes the epimerization of beta-D-mannuronate to alpha-L-guluronate during the synthesis of the linear polysaccharide alginate. In addition, is part of a periplasmic protein complex that protects alginate from degradation by AlgL by channeling the newly formed alginate polymer through a scaffold that transfers the alginate polymer through the periplasmic space to the outer membrane secretin AlgE. The protein is Mannuronan C5-epimerase (algG) of Pseudomonas syringae pv. tomato (strain ATCC BAA-871 / DC3000).